Consider the following 181-residue polypeptide: Shikimate kinase (181 aa).

Glycine 17–threonine 22 serves as a coordination point for ATP. Threonine 21 is a binding site for Mg(2+). The substrate site is built by aspartate 39, arginine 63, and glycine 85. Arginine 122 is an ATP binding site. Arginine 141 lines the substrate pocket.

This sequence belongs to the shikimate kinase family. Monomer. Mg(2+) is required as a cofactor.

It is found in the cytoplasm. It carries out the reaction shikimate + ATP = 3-phosphoshikimate + ADP + H(+). Its pathway is metabolic intermediate biosynthesis; chorismate biosynthesis; chorismate from D-erythrose 4-phosphate and phosphoenolpyruvate: step 5/7. Catalyzes the specific phosphorylation of the 3-hydroxyl group of shikimic acid using ATP as a cosubstrate. The chain is Shikimate kinase from Trichormus variabilis (strain ATCC 29413 / PCC 7937) (Anabaena variabilis).